The chain runs to 381 residues: Beta-lactamase CMY-4 (381 aa).

Residues 1-20 (MMKKSLCCALLLTASFSTFA) form the signal peptide. Ser84 (acyl-ester intermediate) is an active-site residue. The a beta-lactam site is built by Ser84, Gln140, Tyr170, and Asn172.

This sequence belongs to the class-C beta-lactamase family.

It catalyses the reaction a beta-lactam + H2O = a substituted beta-amino acid. In terms of biological role, class C beta-lactamase which confers resistance to penicillins and cephalosporins. The sequence is that of Beta-lactamase CMY-4 from Klebsiella pneumoniae.